The sequence spans 85 residues: Small ribosomal subunit protein bS20 (85 aa).

Belongs to the bacterial ribosomal protein bS20 family.

Its function is as follows. Binds directly to 16S ribosomal RNA. This is Small ribosomal subunit protein bS20 from Lactobacillus johnsonii (strain CNCM I-12250 / La1 / NCC 533).